A 24-amino-acid chain; its full sequence is Brevinin-1Pa (24 aa).

Cysteines 18 and 24 form a disulfide.

Expressed by the skin glands.

The protein localises to the secreted. In terms of biological role, antibacterial activity against Gram-positive bacterium S.aureus and Gram-negative bacterium E.coli. Has activity against C.albicans. This is Brevinin-1Pa from Lithobates pipiens (Northern leopard frog).